Consider the following 257-residue polypeptide: Ribosomal RNA small subunit methyltransferase J (257 aa).

Residues 107-108 (RD), 123-124 (ER), and Asp-177 each bind S-adenosyl-L-methionine.

It belongs to the methyltransferase superfamily. RsmJ family.

It is found in the cytoplasm. It catalyses the reaction guanosine(1516) in 16S rRNA + S-adenosyl-L-methionine = N(2)-methylguanosine(1516) in 16S rRNA + S-adenosyl-L-homocysteine + H(+). In terms of biological role, specifically methylates the guanosine in position 1516 of 16S rRNA. The chain is Ribosomal RNA small subunit methyltransferase J from Haemophilus influenzae (strain PittEE).